A 208-amino-acid chain; its full sequence is Putative dioxygenase RT0384 (208 aa).

Belongs to the intradiol ring-cleavage dioxygenase family.

This chain is Putative dioxygenase RT0384, found in Rickettsia typhi (strain ATCC VR-144 / Wilmington).